A 159-amino-acid polypeptide reads, in one-letter code: Transcription antitermination protein NusB (159 aa).

It belongs to the NusB family.

Involved in transcription antitermination. Required for transcription of ribosomal RNA (rRNA) genes. Binds specifically to the boxA antiterminator sequence of the ribosomal RNA (rrn) operons. This is Transcription antitermination protein NusB from Xanthomonas campestris pv. campestris (strain 8004).